The primary structure comprises 177 residues: Large ribosomal subunit protein uL6 (177 aa).

Belongs to the universal ribosomal protein uL6 family. Part of the 50S ribosomal subunit.

In terms of biological role, this protein binds to the 23S rRNA, and is important in its secondary structure. It is located near the subunit interface in the base of the L7/L12 stalk, and near the tRNA binding site of the peptidyltransferase center. This chain is Large ribosomal subunit protein uL6, found in Cereibacter sphaeroides (strain ATCC 17029 / ATH 2.4.9) (Rhodobacter sphaeroides).